Consider the following 1254-residue polypeptide: Structural polyprotein (1254 aa).

Residues 1–33 (MFPFQPMYPMQPMPYRNPFAAPRRPWFPRTDPF) form a necessary for nucleocapsid assembly and virus assembly region. Residues 33–68 (FLAMQVQELTRSMANLTFKQRRDAPPEGPSAKKPKK) form a host transcription inhibition region. The short motif at 41-48 (LTRSMANL) is the Supraphysiological nuclear export signal element. The interval 45–119 (MANLTFKQRR…KKPGKRQRMV (75 aa)) is disordered. A Nuclear localization signal motif is present at residues 64 to 68 (KKPKK). The segment covering 80-92 (GKKKKNQGKKKAK) has biased composition (basic residues). The binding to the viral RNA stretch occupies residues 91-127 (AKTGPPNPKAQNGNKKKTNKKPGKRQRMVMKLESDKT). Phosphothreonine is present on residues Thr-93 and Thr-108. A compositionally biased stretch (basic residues) spans 104-118 (NKKKTNKKPGKRQRM). Residues 112–126 (PGKRQRMVMKLESDK) are ribosome-binding. The residue at position 124 (Ser-124) is a Phosphoserine. Positions 126–275 (KTFPIMLEGK…KYTPENCEQW (150 aa)) constitute a Peptidase S3 domain. Thr-127 is subject to Phosphothreonine. Active-site charge relay system residues include His-152, Asp-174, and Ser-226. Residues 276–287 (SLVTTMCLLANV) are functions as an uncleaved signal peptide for the precursor of protein E3/E2. Residues 276-701 (SLVTTMCLLA…HYYHRYPMST (426 aa)) are Extracellular-facing. N-linked (GlcNAc...) asparagine; by host glycans are attached at residues Asn-286, Asn-546, and Asn-652. Residues 702-722 (ILGLSICAAIATVSVAASTWL) traverse the membrane as a helical segment. The Cytoplasmic portion of the chain corresponds to 723-757 (FCRSRVACLTPYRLTPNARIPFCLAVLCCARTARA). Residues Cys-730, Cys-750, and Cys-751 are each lipidated (S-palmitoyl cysteine; by host). The interval 730-750 (CLTPYRLTPNARIPFCLAVLC) is transient transmembrane before p62-6K protein processing. The Extracellular segment spans residues 758 to 772 (ETTWESLDHLWNNNQ). The helical transmembrane segment at 773 to 793 (QMFWIQLLIPLAALIVVTRLL) threads the bilayer. Over 794-795 (RC) the chain is Cytoplasmic. The chain crosses the membrane as a helical span at residues 796–816 (VCCVVPFLVMAGAAAGAYEHA). Over 817 to 1224 (TTMPSQAGIS…SKTAWTWLTS (408 aa)) the chain is Extracellular. Cystine bridges form between Cys-861-Cys-926, Cys-874-Cys-906, Cys-875-Cys-908, and Cys-880-Cys-890. The segment at 896–913 (VYPFMWGGAYCFCDTENT) is E1 fusion peptide loop. Asn-946 carries N-linked (GlcNAc...) asparagine; by host glycosylation. Intrachain disulfides connect Cys-1071–Cys-1083, Cys-1113–Cys-1188, Cys-1118–Cys-1192, and Cys-1140–Cys-1182. A helical transmembrane segment spans residues 1225–1245 (LLGGSAVIIIIGLVLATIVAM). At 1246–1254 (YVLTNQKHN) the chain is on the cytoplasmic side.

As to quaternary structure, homodimer. Homomultimer. Interacts with host karyopherin KPNA4; this interaction allows the nuclear import of the viral capsid protein. Interacts with spike glycoprotein E2. Interacts with host IRAK1; the interaction leads to inhibition of IRAK1-dependent signaling. Part of a tetrameric complex composed of host CRM1, host importin alpha/beta dimer and the viral capsid; this complex blocks the receptor-mediated transport through the nuclear pore. Interacts with host phosphatase PPP1CA; this interaction dephosphorylates the capsid protein, which increases its ability to bind to the viral genome. The precursor of protein E3/E2 and E1 form a heterodimer shortly after synthesis. In terms of assembly, interacts with spike glycoprotein E2. The precursor of protein E3/E2 and E1 form a heterodimer shortly after synthesis. Processing of the precursor of protein E3/E2 into E2 and E3 results in a heterodimer of the spike glycoproteins E2 and E1. Spike at virion surface are constituted of three E2-E1 heterodimers. After target cell attachment and endocytosis, E1 change conformation to form homotrimers. Interacts with 6K protein. Interacts with host LDLRAD3; this interaction mediates viral entry to the host cell. As to quaternary structure, interacts with spike glycoprotein E1. Processing of the precursor of protein E3/E2 into E2 and E3 results in a heterodimer of the spike glycoproteins E2 and E1. Spike at virion surface are constituted of a trimer of E2-E1 heterodimers. Interacts with 6K protein. Interacts with host LDLRAD3; this interaction mediates viral entry to the host cell. Oligomer. Interacts with spike glycoprotein E1. Interacts with spike glycoprotein E2. In terms of processing, structural polyprotein: Specific enzymatic cleavages in vivo yield mature proteins. Capsid protein is auto-cleaved during polyprotein translation, unmasking a signal peptide at the N-terminus of the precursor of E3/E2. The remaining polyprotein is then targeted to the host endoplasmic reticulum, where host signal peptidase cleaves it into pE2, 6K and E1 proteins. pE2 is further processed to mature E3 and E2 by host furin in trans-Golgi vesicle. Palmitoylated via thioester bonds. These palmitoylations may induce disruption of the C-terminus transmembrane. This would result in the reorientation of E2 C-terminus from lumenal to cytoplasmic side. Post-translationally, phosphorylated on serine and threonine residues. In terms of processing, N-glycosylated. Palmitoylated via thioester bonds.

It is found in the virion. It localises to the host cytoplasm. Its subcellular location is the host cell membrane. The protein resides in the host nucleus. The protein localises to the virion membrane. The enzyme catalyses Autocatalytic release of the core protein from the N-terminus of the togavirus structural polyprotein by hydrolysis of a -Trp-|-Ser- bond.. Its function is as follows. Forms an icosahedral capsid with a T=4 symmetry composed of 240 copies of the capsid protein surrounded by a lipid membrane through which penetrate 80 spikes composed of trimers of E1-E2 heterodimers. The capsid protein binds to the viral RNA genome at a site adjacent to a ribosome binding site for viral genome translation following genome release. Possesses a protease activity that results in its autocatalytic cleavage from the nascent structural protein. Following its self-cleavage, the capsid protein transiently associates with ribosomes, and within several minutes the protein binds to viral RNA and rapidly assembles into icosahedric core particles. The resulting nucleocapsid eventually associates with the cytoplasmic domain of the spike glycoprotein E2 at the cell membrane, leading to budding and formation of mature virions. In case of infection, new virions attach to target cells and after clathrin-mediated endocytosis their membrane fuses with the host endosomal membrane. This leads to the release of the nucleocapsid into the cytoplasm, followed by an uncoating event necessary for the genomic RNA to become accessible. The uncoating might be triggered by the interaction of capsid proteins with ribosomes. Binding of ribosomes would release the genomic RNA since the same region is genomic RNA-binding and ribosome-binding. Specifically inhibits interleukin-1 receptor-associated kinase 1/IRAK1-dependent signaling during viral entry, representing a means by which the alphaviruses may evade innate immune detection and activation prior to viral gene expression. Inhibits host transcription. Forms a tetrameric complex with XPO1/CRM1 and the nuclear import receptor importin. This complex blocks the central channel of host nuclear pores thereby inhibiting the receptor-mediated nuclear transport and thus the host mRNA and rRNA transcription. The inhibition of transcription is linked to a cytopathic effect on the host cell. Provides the signal sequence for the translocation of the precursor of protein E3/E2 to the host endoplasmic reticulum. Furin-cleaved E3 remains associated with spike glycoprotein E1 and mediates pH protection of the latter during the transport via the secretory pathway. After virion release from the host cell, the assembly protein E3 is gradually released in the extracellular space. Functionally, plays a role in viral attachment to target host cell, by binding to the cell receptor LDLRAD3. Synthesized as a p62 precursor which is processed by furin at the cell membrane just before virion budding, giving rise to E2-E1 heterodimer. The p62-E1 heterodimer is stable, whereas E2-E1 is unstable and dissociate at low pH. p62 is processed at the last step, presumably to avoid E1 fusion activation before its final export to cell surface. E2 C-terminus contains a transitory transmembrane that would be disrupted by palmitoylation, resulting in reorientation of the C-terminal tail from lumenal to cytoplasmic side. This step is critical since E2 C-terminus is involved in budding by interacting with capsid proteins. This release of E2 C-terminus in cytoplasm occurs lately in protein export, and precludes premature assembly of particles at the endoplasmic reticulum membrane. In terms of biological role, acts as a viroporin that participates in virus glycoprotein processing and transport to the plasma membrane, cell permeabilization and budding of viral particles. Disrupts the calcium homeostasis of the cell, probably at the endoplasmic reticulum level. This leads to cytoplasmic calcium elevation. Because of its lipophilic properties, the 6K protein is postulated to influence the selection of lipids that interact with the transmembrane domains of the glycoproteins, which, in turn, affects the deformability of the bilayer required for the extreme curvature that occurs as budding proceeds. Present in low amount in virions, about 3% compared to viral glycoproteins. Its function is as follows. Class II viral fusion protein. Fusion activity is inactive as long as E1 is bound to E2 in mature virion. After virus attachment to cell receptor LDLRAD3 and endocytosis, acidification of the endosome would induce dissociation of E1/E2 heterodimer and concomitant trimerization of the E1 subunits. This E1 trimer is fusion active, and promotes release of viral nucleocapsid in cytoplasm after endosome and viral membrane fusion. Efficient fusion requires the presence of cholesterol and sphingolipid in the target membrane. Fusion is optimal at levels of about 1 molecule of cholesterol per 2 molecules of phospholipids, and is specific for sterols containing a 3-beta-hydroxyl group. The sequence is that of Structural polyprotein from Bos taurus (Bovine).